A 738-amino-acid polypeptide reads, in one-letter code: Ribosomal RNA large subunit methyltransferase K/L (738 aa).

Positions 46–157 (TAYRVCLWSR…ADQAVIGLDL (112 aa)) constitute a THUMP domain.

The protein belongs to the methyltransferase superfamily. RlmKL family.

The protein localises to the cytoplasm. The catalysed reaction is guanosine(2445) in 23S rRNA + S-adenosyl-L-methionine = N(2)-methylguanosine(2445) in 23S rRNA + S-adenosyl-L-homocysteine + H(+). It catalyses the reaction guanosine(2069) in 23S rRNA + S-adenosyl-L-methionine = N(2)-methylguanosine(2069) in 23S rRNA + S-adenosyl-L-homocysteine + H(+). Functionally, specifically methylates the guanine in position 2445 (m2G2445) and the guanine in position 2069 (m7G2069) of 23S rRNA. This Methylococcus capsulatus (strain ATCC 33009 / NCIMB 11132 / Bath) protein is Ribosomal RNA large subunit methyltransferase K/L.